The chain runs to 562 residues: Arginine--tRNA ligase (562 aa).

The 'HIGH' region motif lies at 129–139 (ANPTGPLHVGH).

The protein belongs to the class-I aminoacyl-tRNA synthetase family. Monomer.

The protein localises to the cytoplasm. The enzyme catalyses tRNA(Arg) + L-arginine + ATP = L-arginyl-tRNA(Arg) + AMP + diphosphate. In Stenotrophomonas maltophilia (strain K279a), this protein is Arginine--tRNA ligase.